An 843-amino-acid polypeptide reads, in one-letter code: DNA-directed RNA polymerase subunit beta' (843 aa).

Residues cysteine 70, cysteine 72, cysteine 85, and cysteine 88 each coordinate Zn(2+). The Mg(2+) site is built by aspartate 686, aspartate 688, and aspartate 690.

This sequence belongs to the RNA polymerase beta' chain family. RpoC1 subfamily. As to quaternary structure, in plastids the minimal PEP RNA polymerase catalytic core is composed of four subunits: alpha, beta, beta', and beta''. When a (nuclear-encoded) sigma factor is associated with the core the holoenzyme is formed, which can initiate transcription. Mg(2+) is required as a cofactor. Requires Zn(2+) as cofactor.

The protein localises to the plastid. Its subcellular location is the chloroplast. The catalysed reaction is RNA(n) + a ribonucleoside 5'-triphosphate = RNA(n+1) + diphosphate. In terms of biological role, DNA-dependent RNA polymerase catalyzes the transcription of DNA into RNA using the four ribonucleoside triphosphates as substrates. The sequence is that of DNA-directed RNA polymerase subunit beta' from Trieres chinensis (Marine centric diatom).